Consider the following 699-residue polypeptide: MSKINKLEQIRNIGICAHIDAGKTTTTERILYYTGKSHKIGEVHEGGATMDWMEQEQERGITITSAATTCRWQDKVINIIDTPGHVDFTIEVERSLRVLDGAVAVFDGVAGVEPQSETVWRQADKYNVPRMCFVNKMDRMGADFYRCVEMIKDRLGARSLIIQLPIGIEENFKGIVNLIKMKAVIWKDESLGAEYFEEDIPADMQDKAAEYRARLLDMVVELDDTIMEQYLSGAEITEEQIKILIRKGTIEARFYPILCGSAFKNKGVQPLLDAIVDFLPSPIDIGIVKGIEVSTSEEKDFPISIVEPFSALAFKIMNDPFVGSLTFIRIYSGKITSGATVINTVKNKREKIGRMLLMHANNREDIKEASAGDIVALAGLKDTSTGDTLSDIDKQVVLERMEFPEPVIELAVEPKSTADQEKMGLALSRLAAEDPSFRVSTDHETGQTVIKGMGELHLEIIIDRMRREFKVEANIGAPQVAYRETITTACEIDYTHKKQSGGAGQFARVKIIFEPLKDVIDLKDEDKNKTFVFESKIVGGAVPKEYIPGVEKGLNNIRETGVIAGYPMIDFKATLVDGAFHDVDSSVLAFEIAAKGAFREGMQKGNPKLLEPIMKVEVITPDEYMGDIIGDLNSRRGQIQNMDPRGNAQVVTAHVPLAEMFGYVNTLRSLSQGRAQFSMIFSHYDQVPSQVADMIKAKK.

A tr-type G domain is found at 8 to 283 (EQIRNIGICA…AIVDFLPSPI (276 aa)). Residues 17 to 24 (AHIDAGKT), 81 to 85 (DTPGH), and 135 to 138 (NKMD) each bind GTP.

The protein belongs to the TRAFAC class translation factor GTPase superfamily. Classic translation factor GTPase family. EF-G/EF-2 subfamily.

The protein localises to the cytoplasm. Functionally, catalyzes the GTP-dependent ribosomal translocation step during translation elongation. During this step, the ribosome changes from the pre-translocational (PRE) to the post-translocational (POST) state as the newly formed A-site-bound peptidyl-tRNA and P-site-bound deacylated tRNA move to the P and E sites, respectively. Catalyzes the coordinated movement of the two tRNA molecules, the mRNA and conformational changes in the ribosome. In Rickettsia prowazekii (strain Madrid E), this protein is Elongation factor G (fusA).